Consider the following 364-residue polypeptide: Chorismate synthase (364 aa).

R47 serves as a coordination point for NADP(+). FMN is bound by residues 125–127, G285, 300–304, and R327; these read RFS and KPTPS.

This sequence belongs to the chorismate synthase family. In terms of assembly, homotetramer. The cofactor is FMNH2.

It carries out the reaction 5-O-(1-carboxyvinyl)-3-phosphoshikimate = chorismate + phosphate. Its pathway is metabolic intermediate biosynthesis; chorismate biosynthesis; chorismate from D-erythrose 4-phosphate and phosphoenolpyruvate: step 7/7. In terms of biological role, catalyzes the anti-1,4-elimination of the C-3 phosphate and the C-6 proR hydrogen from 5-enolpyruvylshikimate-3-phosphate (EPSP) to yield chorismate, which is the branch point compound that serves as the starting substrate for the three terminal pathways of aromatic amino acid biosynthesis. This reaction introduces a second double bond into the aromatic ring system. This is Chorismate synthase from Dehalococcoides mccartyi (strain ATCC BAA-2266 / KCTC 15142 / 195) (Dehalococcoides ethenogenes (strain 195)).